A 349-amino-acid chain; its full sequence is MSTLCLPHVMFPQHKITQQQMVDHLENLHADHPRMALAKRMIANTEVNERHLVLPIDELAVHTGFTHRSIVYEREARQMSSAAARQAIENAGLQISDIRMVIVTSCTGFMMPSLTAHLINDLALPTSTVQLPIAQLGCVAGAAAINRANDFARLDARNHVLIVSLEFSSLCYQPDDTKLHAFISAALFGDAVSACVLRADDQAGGFKIKKTESYFLPKSEHYIKYDVKDTGFHFTLDKAVMNSIKDVAPVMERLNYESFEQNCAHNDFFIFHTGGRKILDELVMHLDLASNRVSQSRSSLSEAGNIASVVVFDVLKRQFDSNLNRGDIGLLAAFGPGFTAEMAVGEWTA.

Cys138 is an active-site residue.

Belongs to the thiolase-like superfamily. Chalcone/stilbene synthases family.

It catalyses the reaction 3 malonyl-CoA + 3 H(+) = 1,3,5-trihydroxybenzene + 3 CO2 + 3 CoA. The protein operates within antibiotic biosynthesis. Type III polyketide synthase that catalyzes the synthesis of phloroglucinol from three molecules of malonyl-CoA. In addition to its ability to produce phloroglucinol from malonyl-CoA, it exhibits broad substrate specificity, accepting C4-C12 aliphatic acyl-CoAs and phenylacetyl-CoA as the starters to form C6-polyoxoalkylated alpha-pyrones from sequential condensation with malonyl-CoA. The polypeptide is Phloroglucinol synthase (Pseudomonas fluorescens (strain ATCC BAA-477 / NRRL B-23932 / Pf-5)).